Consider the following 397-residue polypeptide: MSESVHTNTSLWSKGMKAVIVAQFLSAFGDNALLFATLALLKAQFYPEWSQPILQMVFVGAYILFAPFVGQVADSFAKGRVMMFANGLKLLGAASICFGINPFLGYTLVGVGAAAYSPAKYGILGELTTGSKLVKANGLMEASTIAAILLGSVAGGVLADWHVLVALAACALAYGGAVVANIYIPKLAAARPGQSWNLISMTRSFLNACTSLWRNGETRFSLVGTSLFWGAGVTLRFLLVLWVPVALGITDNATPTYLNAMVAIGIVVGAGAAAKLVTLETVSRCMPAGILIGVVVLIFSLQHELLPAYALLMLIGVLGGFFVVPLNALLQERGKKSVGAGNAIAVQNLGENSAMLLMLGIYSLAVMVGIPVVPIGIGFGALFALAITALWIWQRRH.

Over 1–17 the chain is Periplasmic; it reads MSESVHTNTSLWSKGMK. Residues 18–38 traverse the membrane as a helical segment; the sequence is AVIVAQFLSAFGDNALLFATL. At 39–52 the chain is on the cytoplasmic side; it reads ALLKAQFYPEWSQP. The chain crosses the membrane as a helical span at residues 53–73; the sequence is ILQMVFVGAYILFAPFVGQVA. Topologically, residues 74 to 90 are periplasmic; sequence DSFAKGRVMMFANGLKL. Residues 91–111 traverse the membrane as a helical segment; that stretch reads LGAASICFGINPFLGYTLVGV. Residues 112–144 lie on the Cytoplasmic side of the membrane; it reads GAAAYSPAKYGILGELTTGSKLVKANGLMEAST. Residues 145 to 165 form a helical membrane-spanning segment; that stretch reads IAAILLGSVAGGVLADWHVLV. A topological domain (periplasmic) is located at residue alanine 166. Residues 167-187 traverse the membrane as a helical segment; it reads LAACALAYGGAVVANIYIPKL. Topologically, residues 188–226 are cytoplasmic; the sequence is AAARPGQSWNLISMTRSFLNACTSLWRNGETRFSLVGTS. The chain crosses the membrane as a helical span at residues 227 to 247; that stretch reads LFWGAGVTLRFLLVLWVPVAL. Topologically, residues 248-256 are periplasmic; it reads GITDNATPT. A helical transmembrane segment spans residues 257-277; the sequence is YLNAMVAIGIVVGAGAAAKLV. At 278-280 the chain is on the cytoplasmic side; the sequence is TLE. The helical transmembrane segment at 281–301 threads the bilayer; the sequence is TVSRCMPAGILIGVVVLIFSL. Residues 302 to 304 are Periplasmic-facing; the sequence is QHE. The helical transmembrane segment at 305–325 threads the bilayer; it reads LLPAYALLMLIGVLGGFFVVP. Residues 326 to 343 lie on the Cytoplasmic side of the membrane; it reads LNALLQERGKKSVGAGNA. A helical transmembrane segment spans residues 344–364; sequence IAVQNLGENSAMLLMLGIYSL. The Periplasmic segment spans residues 365 to 366; it reads AV. The chain crosses the membrane as a helical span at residues 367 to 387; sequence MVGIPVVPIGIGFGALFALAI. Residues 388–397 are Cytoplasmic-facing; it reads TALWIWQRRH.

Belongs to the major facilitator superfamily. LplT (TC 2.A.1.42) family.

Its subcellular location is the cell inner membrane. Catalyzes the facilitated diffusion of 2-acyl-glycero-3-phosphoethanolamine (2-acyl-GPE) into the cell. This Escherichia coli O7:K1 (strain IAI39 / ExPEC) protein is Lysophospholipid transporter LplT.